The following is a 748-amino-acid chain: Phosphoenolpyruvate-dependent phosphotransferase system (748 aa).

The GAF domain occupies 1 to 127; it reads MLTRLREIVE…RRQLLGVLVV (127 aa). The tract at residues 128 to 170 is linker; it reads QQRELRQYDESEESFLVTLATQMAAILSQSQVTALFGQYRQTR. Positions 171 to 748 are PTS EI; the sequence is IRALPAAPGV…GMGGLIRGGL (578 aa). His356 acts as the Tele-phosphohistidine intermediate in catalysis. Residues Arg462 and Arg498 each coordinate phosphoenolpyruvate. Mg(2+) contacts are provided by Glu597 and Asp621. Phosphoenolpyruvate contacts are provided by residues 620–621 and Arg631; that span reads ND. The active-site Proton donor is Cys668.

This sequence belongs to the PEP-utilizing enzyme family. It depends on Mg(2+) as a cofactor.

It is found in the cytoplasm. It catalyses the reaction L-histidyl-[protein] + phosphoenolpyruvate = N(pros)-phospho-L-histidyl-[protein] + pyruvate. Component of the phosphoenolpyruvate-dependent nitrogen-metabolic phosphotransferase system (nitrogen-metabolic PTS), that seems to be involved in regulating nitrogen metabolism. Enzyme I-Ntr transfers the phosphoryl group from phosphoenolpyruvate (PEP) to the phosphoryl carrier protein (NPr). Could function in the transcriptional regulation of sigma-54 dependent operons in conjunction with the NPr (PtsO) and EIIA-Ntr (PtsN) proteins. Enzyme I-Ntr is specific for NPr. This Salmonella typhimurium (strain LT2 / SGSC1412 / ATCC 700720) protein is Phosphoenolpyruvate-dependent phosphotransferase system (ptsP).